The sequence spans 450 residues: MPLRPHIGLGFPAHAYQKRHVEPHDRSTGYQPKVRITDRYRIIGFISSGTYGRVYKAVGRNGKPVGEFAIKKFKPDKEGEQISYTGISQSAIREMSLCSELHHINVIRLCEIVLEDKCIFMVFEYAEHDLLQIIHHHTQQPRHPIPPATIKSIMFQLLNGCQYLHINWVLHRDLKPANIMVTSSGEVKIGDLGLARRFDKPLHSLFSGDKVVVTIWYRAPELILGSYHYTPAIDMWAVGCIFAELLSLRPIFKGEEAKMDSKKTVPFRRNQMQKIIEIMGVPTKDKWPLLSTMPEYNQLNTLANSMASSHHNHHSHHHPHHHHGHYGSRNPPPPGGSNLEKWYYSTINHTSAPGGTPPLASLGSEGYKLLAGLLEYDPSKRLTAAQALQSPFFSTGDRVSANCFEGCKNEYPCRRVSQDDNDIRTSSLPGTKRSGLPDDSLIRPAKRQKE.

One can recognise a Protein kinase domain in the interval 40-393 (YRIIGFISSG…AAQALQSPFF (354 aa)). ATP contacts are provided by residues 46–54 (ISSGTYGRV) and Lys71. Catalysis depends on Asp173, which acts as the Proton acceptor. Disordered regions lie at residues 307 to 341 (ASSH…NLEK) and 418 to 450 (QDDN…RQKE). Over residues 310-326 (HHNHHSHHHPHHHHGHY) the composition is skewed to basic residues.

It belongs to the protein kinase superfamily. CMGC Ser/Thr protein kinase family. CDC2/CDKX subfamily. Component of the SRB8-11 complex, a regulatory module of the Mediator complex. Interacts with SSN8/FCC1. It depends on Mg(2+) as a cofactor.

The protein localises to the nucleus. It catalyses the reaction L-seryl-[protein] + ATP = O-phospho-L-seryl-[protein] + ADP + H(+). It carries out the reaction L-threonyl-[protein] + ATP = O-phospho-L-threonyl-[protein] + ADP + H(+). The catalysed reaction is [DNA-directed RNA polymerase] + ATP = phospho-[DNA-directed RNA polymerase] + ADP + H(+). In terms of biological role, component of the SRB8-11 complex. The SRB8-11 complex is a regulatory module of the Mediator complex which is itself involved in regulation of basal and activated RNA polymerase II-dependent transcription. The SRB8-11 complex may be involved in the transcriptional repression of a subset of genes regulated by Mediator. It may inhibit the association of the Mediator complex with RNA polymerase II to form the holoenzyme complex. The SRB8-11 complex phosphorylates the C-terminal domain (CTD) of the largest subunit of RNA polymerase II. Required for normal growth and secondary metabolism. The chain is Serine/threonine-protein kinase SSN3 (SSN3) from Gibberella moniliformis (Maize ear and stalk rot fungus).